The sequence spans 424 residues: Glutamyl-tRNA reductase (424 aa).

Substrate-binding positions include 51–54 (TCNR), Ser-99, 104–106 (EDQ), and Gln-110. The Nucleophile role is filled by Cys-52. NADP(+) is bound at residue 179-184 (GTGEMG).

Belongs to the glutamyl-tRNA reductase family. As to quaternary structure, homodimer.

It carries out the reaction (S)-4-amino-5-oxopentanoate + tRNA(Glu) + NADP(+) = L-glutamyl-tRNA(Glu) + NADPH + H(+). The protein operates within porphyrin-containing compound metabolism; protoporphyrin-IX biosynthesis; 5-aminolevulinate from L-glutamyl-tRNA(Glu): step 1/2. In terms of biological role, catalyzes the NADPH-dependent reduction of glutamyl-tRNA(Glu) to glutamate 1-semialdehyde (GSA). In Methanospirillum hungatei JF-1 (strain ATCC 27890 / DSM 864 / NBRC 100397 / JF-1), this protein is Glutamyl-tRNA reductase.